A 402-amino-acid polypeptide reads, in one-letter code: Nicotinate phosphoribosyltransferase (402 aa).

Position 224 is a phosphohistidine; by autocatalysis (His-224).

This sequence belongs to the NAPRTase family. Transiently phosphorylated on a His residue during the reaction cycle. Phosphorylation strongly increases the affinity for substrates and increases the rate of nicotinate D-ribonucleotide production. Dephosphorylation regenerates the low-affinity form of the enzyme, leading to product release.

The catalysed reaction is nicotinate + 5-phospho-alpha-D-ribose 1-diphosphate + ATP + H2O = nicotinate beta-D-ribonucleotide + ADP + phosphate + diphosphate. It participates in cofactor biosynthesis; NAD(+) biosynthesis; nicotinate D-ribonucleotide from nicotinate: step 1/1. Its function is as follows. Catalyzes the synthesis of beta-nicotinate D-ribonucleotide from nicotinate and 5-phospho-D-ribose 1-phosphate at the expense of ATP. In Neisseria meningitidis serogroup B (strain ATCC BAA-335 / MC58), this protein is Nicotinate phosphoribosyltransferase.